A 51-amino-acid polypeptide reads, in one-letter code: Large ribosomal subunit protein eL39 (51 aa).

Belongs to the eukaryotic ribosomal protein eL39 family.

The polypeptide is Large ribosomal subunit protein eL39 (Saccharolobus islandicus (strain Y.N.15.51 / Yellowstone #2) (Sulfolobus islandicus)).